Reading from the N-terminus, the 333-residue chain is L-lactate dehydrogenase A chain (333 aa).

NAD(+) is bound by residues 30–58 and Arg-100; that span reads GMVG…MEDK. Arg-107, Asn-139, and Arg-170 together coordinate substrate. Asn-139 is an NAD(+) binding site. The Proton acceptor role is filled by His-194. Thr-249 is a binding site for substrate.

Belongs to the LDH/MDH superfamily. LDH family. Homotetramer.

It is found in the cytoplasm. The enzyme catalyses (S)-lactate + NAD(+) = pyruvate + NADH + H(+). The protein operates within fermentation; pyruvate fermentation to lactate; (S)-lactate from pyruvate: step 1/1. Its function is as follows. Interconverts simultaneously and stereospecifically pyruvate and lactate with concomitant interconversion of NADH and NAD(+). This chain is L-lactate dehydrogenase A chain (ldha), found in Danio rerio (Zebrafish).